Reading from the N-terminus, the 432-residue chain is Trigger factor (432 aa).

The 86-residue stretch at 161–246 (DDRVTIDFVG…LKKIENMVLP (86 aa)) folds into the PPIase FKBP-type domain.

It belongs to the FKBP-type PPIase family. Tig subfamily.

The protein localises to the cytoplasm. The catalysed reaction is [protein]-peptidylproline (omega=180) = [protein]-peptidylproline (omega=0). Its function is as follows. Involved in protein export. Acts as a chaperone by maintaining the newly synthesized protein in an open conformation. Functions as a peptidyl-prolyl cis-trans isomerase. The protein is Trigger factor of Haemophilus influenzae (strain 86-028NP).